The primary structure comprises 104 residues: NADH-quinone oxidoreductase subunit K (104 aa).

The next 3 helical transmembrane spans lie at 4–24 (VPAS…LFGA), 31–51 (VIVL…LVAF), and 67–87 (LFTM…LIAL).

It belongs to the complex I subunit 4L family. In terms of assembly, NDH-1 is composed of 14 different subunits. Subunits NuoA, H, J, K, L, M, N constitute the membrane sector of the complex.

The protein resides in the cell membrane. It catalyses the reaction a quinone + NADH + 5 H(+)(in) = a quinol + NAD(+) + 4 H(+)(out). In terms of biological role, NDH-1 shuttles electrons from NADH, via FMN and iron-sulfur (Fe-S) centers, to quinones in the respiratory chain. The immediate electron acceptor for the enzyme in this species is believed to be a menaquinone. Couples the redox reaction to proton translocation (for every two electrons transferred, four hydrogen ions are translocated across the cytoplasmic membrane), and thus conserves the redox energy in a proton gradient. This Bacillus cytotoxicus (strain DSM 22905 / CIP 110041 / 391-98 / NVH 391-98) protein is NADH-quinone oxidoreductase subunit K.